Reading from the N-terminus, the 130-residue chain is Small ribosomal subunit protein uS9 (130 aa).

The protein belongs to the universal ribosomal protein uS9 family.

The polypeptide is Small ribosomal subunit protein uS9 (Exiguobacterium sibiricum (strain DSM 17290 / CCUG 55495 / CIP 109462 / JCM 13490 / 255-15)).